The sequence spans 121 residues: Insulin-like peptide 01 (121 aa).

A signal peptide spans 1-24 (MDSFTRASLITFLILLTLTSLVFS). The propeptide occupies 25-45 (NGCMMRGGCFKTSEDAHRLIM). Disulfide bonds link cysteine 52–cysteine 107, cysteine 64–cysteine 120, and cysteine 106–cysteine 111. Residues 69–97 (RRRKRDLRRKLGIVMDRKESHKFLRRRKR) constitute a propeptide, c peptide.

The protein belongs to the insulin family.

The protein resides in the secreted. Functionally, insulin decreases blood glucose concentration. May have evolved to activate insulin receptors (INSR) in vertebrates. Molecular docking studies reveals unique interaction with the human insulin receptor. In vivo, insulin-like peptide injection reduces blood glucose levels in two models of zebrafish diabetes (streptozotocin- and glucose-induced). Also shorter swimming distance of zebrafish larvae, an effect which is not observed with human insulin. The chain is Insulin-like peptide 01 from Exaiptasia diaphana (Tropical sea anemone).